A 342-amino-acid polypeptide reads, in one-letter code: Protein-glutamate methylesterase/protein-glutamine glutaminase 4 (342 aa).

Residues N2–L119 enclose the Response regulatory domain. Residue D53 is modified to 4-aspartylphosphate. A CheB-type methylesterase domain is found at P144 to N337. Residues S159, H186, and D279 contribute to the active site.

The protein belongs to the CheB family. In terms of processing, phosphorylated by CheA. Phosphorylation of the N-terminal regulatory domain activates the methylesterase activity.

It is found in the cytoplasm. The enzyme catalyses [protein]-L-glutamate 5-O-methyl ester + H2O = L-glutamyl-[protein] + methanol + H(+). The catalysed reaction is L-glutaminyl-[protein] + H2O = L-glutamyl-[protein] + NH4(+). Its function is as follows. Involved in chemotaxis. Part of a chemotaxis signal transduction system that modulates chemotaxis in response to various stimuli. Catalyzes the demethylation of specific methylglutamate residues introduced into the chemoreceptors (methyl-accepting chemotaxis proteins or MCP) by CheR. Also mediates the irreversible deamidation of specific glutamine residues to glutamic acid. In Burkholderia thailandensis (strain ATCC 700388 / DSM 13276 / CCUG 48851 / CIP 106301 / E264), this protein is Protein-glutamate methylesterase/protein-glutamine glutaminase 4.